The primary structure comprises 175 residues: Pituitary adenylate cyclase-activating polypeptide (175 aa).

A signal peptide spans 1–24; sequence MTMCSGARLALLVYGIIMHSSVSC. Positions 25 to 78 are excised as a propeptide; the sequence is SPAAGLSFPGIRPEDEAYDQDGNPLQDFYDWDPPGVGSPASALRDAYALYYPAD. The segment at 149-157 is important for receptor binding; the sequence is VKKYLAAVL. At Leu-157 the chain carries Leucine amide. The residue at position 168 (Lys-168) is a Lysine amide. A propeptide spanning residues 172 to 175 is cleaved from the precursor; sequence IAYL.

It belongs to the glucagon family.

The protein resides in the secreted. Its function is as follows. PACAP is a neuropeptide involved in diverse array of physiological processes through activating the PACAP subfamily of class B1 G protein-coupled receptors: VIP receptor 1 (VIPR1), VIP receptor 2 (VIPR2), and PACAP type I receptor (ADCYAP1R1). Exerts neuroprotective and general cytoprotective effects due to anti-apoptotic, anti-inflammatory, and antioxidant actions. Promotes neuron projection development through the RAPGEF2/Rap1/B-Raf/ERK pathway. In chromaffin cells, induces long-lasting increase of intracellular calcium concentrations and neuroendocrine secretion. Involved in the control of glucose homeostasis, induces insulin secretion by pancreatic beta cells. PACAP exists in two bioactive forms from proteolysis of the same precursor protein, PACAP27 and PACAP38, which differ by eleven amino acid residues in the C-terminus. This Mus musculus (Mouse) protein is Pituitary adenylate cyclase-activating polypeptide.